The primary structure comprises 120 residues: Seripauperin-24 (120 aa).

Positions 1 to 20 are cleaved as a signal peptide; it reads MVKLTSIAAGVAAIAATASA.

Belongs to the SRP1/TIP1 family. Seripauperin subfamily. Post-translationally, O-glycosylated.

It is found in the secreted. The protein resides in the cell wall. Its function is as follows. Component of the cell wall. The protein is Seripauperin-24 (PAU24) of Saccharomyces cerevisiae (strain ATCC 204508 / S288c) (Baker's yeast).